The primary structure comprises 402 residues: MPGAGGKKKSPWASGERRPHFFKVLVGDFKQRLKIPPNFCKHIPWEESRKAKGLKEASMAATLEGPSGRTWLVVIRRTAEGTFFTSGWPKFVQDQALRELEFVVFRYDGNTRFTAMVFDRTACEREDLMGGGGGDRPRKKRGRPRTAAASRDAARPKKDSVGKEMVTYRASPSGGQPLQIVDSSWTPEPGSTAVKNEEDADELPVCELPASSASPPRHVPEGALDADGGAARRGAAKTRSLQDDLALASIPPSIRRYKGYVSRRRAVATAERQRATEIAHAFRSPLPYCVIRMSTMHVYYSFMMRFPTGFSRQHLPRERTDVVLRDPGGKVWSVLYIPNTRDRLSRGWCAFARGNCLEEGDYCVFELVAAAEFRVHIFRVVEPAVPAVRLRRVTVTCGRGPT.

The segment at residues 18–121 (RPHFFKVLVG…RFTAMVFDRT (104 aa)) is a DNA-binding region (TF-B3 1). The disordered stretch occupies residues 126 to 203 (EDLMGGGGGD…VKNEEDADEL (78 aa)). A compositionally biased stretch (basic and acidic residues) spans 152 to 162 (DAARPKKDSVG). Over residues 173 to 186 (SGGQPLQIVDSSWT) the composition is skewed to polar residues. The segment at residues 289 to 381 (CVIRMSTMHV…EFRVHIFRVV (93 aa)) is a DNA-binding region (TF-B3 2).

It is found in the nucleus. This Oryza sativa subsp. japonica (Rice) protein is B3 domain-containing protein Os01g0723500.